A 411-amino-acid polypeptide reads, in one-letter code: Peptidase T (411 aa).

Histidine 78 serves as a coordination point for Zn(2+). Residue aspartate 80 is part of the active site. Residue aspartate 140 participates in Zn(2+) binding. Glutamate 173 serves as the catalytic Proton acceptor. Residues glutamate 174, aspartate 196, and histidine 379 each coordinate Zn(2+).

Belongs to the peptidase M20B family. Requires Zn(2+) as cofactor.

Its subcellular location is the cytoplasm. The catalysed reaction is Release of the N-terminal residue from a tripeptide.. Functionally, cleaves the N-terminal amino acid of tripeptides. This chain is Peptidase T, found in Yersinia pseudotuberculosis serotype O:3 (strain YPIII).